Consider the following 189-residue polypeptide: Ribosome maturation factor RimM (189 aa).

Residues Glu-96–Gly-169 enclose the PRC barrel domain. Residues Leu-170–Ser-189 form a disordered region.

This sequence belongs to the RimM family. As to quaternary structure, binds ribosomal protein uS19.

It localises to the cytoplasm. An accessory protein needed during the final step in the assembly of 30S ribosomal subunit, possibly for assembly of the head region. Essential for efficient processing of 16S rRNA. May be needed both before and after RbfA during the maturation of 16S rRNA. It has affinity for free ribosomal 30S subunits but not for 70S ribosomes. The chain is Ribosome maturation factor RimM from Brucella anthropi (strain ATCC 49188 / DSM 6882 / CCUG 24695 / JCM 21032 / LMG 3331 / NBRC 15819 / NCTC 12168 / Alc 37) (Ochrobactrum anthropi).